We begin with the raw amino-acid sequence, 246 residues long: Glandular kallikrein (246 aa).

Positions 1-7 are excised as a propeptide; that stretch reads APPIQSR. The Peptidase S1 domain maps to 8–243; that stretch reads IIGGRECEKN…YLDWINDTIT (236 aa). 5 disulfides stabilise this stretch: C14–C158, C33–C49, C135–C204, C169–C183, and C194–C219. H48 serves as the catalytic Charge relay system. N-linked (GlcNAc...) asparagine glycosylation occurs at N85. The kallikrein (autolysis) loop stretch occupies residues 85 to 104; sequence NLSLLKXHTKADGKDYSHDL. Catalysis depends on D103, which acts as the Charge relay system. Catalysis depends on S198, which acts as the Charge relay system. An N-linked (GlcNAc...) asparagine glycan is attached at N239.

The protein belongs to the peptidase S1 family. Kallikrein subfamily. In terms of assembly, monomer.

It catalyses the reaction Preferential cleavage of Arg-|-Xaa bonds in small molecule substrates. Highly selective action to release kallidin (lysyl-bradykinin) from kininogen involves hydrolysis of Met-|-Xaa or Leu-|-Xaa.. In terms of biological role, glandular kallikreins cleave Met-Lys and Arg-Ser bonds in kininogen to release Lys-bradykinin. The sequence is that of Glandular kallikrein from Sus scrofa (Pig).